The following is a 430-amino-acid chain: Putative cytochrome P450 139 (430 aa).

Residue C372 coordinates heme.

It belongs to the cytochrome P450 family. Heme serves as cofactor.

This chain is Putative cytochrome P450 139 (cyp139), found in Mycobacterium bovis (strain ATCC BAA-935 / AF2122/97).